Here is a 599-residue protein sequence, read N- to C-terminus: MTTQVPPSALLPLNPEQLARLQAATTDLTPTQLAWVSGYFWGVLNQQPAALAATPAPAAEMPGITIISASQTGNARRVAEALRDDLLAAKLNVKLVNAGDYKFKQIASEKLLIVVTSTQGEGEPPEEAVALHKFLFSKKAPKLENTAFAVFSLGDSSYEFFCQSGKDFDSKLAELGGERLLDRVDADVEYQAAASEWRARVVDALKSRAPVAAPSQSVATGAVNEIHTSPYSKDAPLVASLSVNQKITGRNSEKDVRHIEIDLGDSGMRYQPGDALGVWYQNDPALVKELVELLWLKGDEPVTVEGKTLPLNEALQWHFELTVNTANIVENYATLTRSETLLPLVGDKAKLQHYAATTPIVDMVRFSPAQLDAEALINLLRPLTPRLYSIASSQAEVENEVHVTVGVVRYDVEGRARAGGASSFLADRVEEEGEVRVFIEHNDNFRLPANPETPVIMIGPGTGIAPFRAFMQQRAADEAPGKNWLFFGNPHFTEDFLYQVEWQRYVKDGVLTRIDLAWSRDQKEKVYVQDKLREQGAELWRWINDGAHIYVCGDANRMAKDVEQALLEVIAEFGGMDTEAADEFLSELRVERRYQRDVY.

Residues 64 to 202 (ITIISASQTG…AASEWRARVV (139 aa)) form the Flavodoxin-like domain. FMN contacts are provided by residues 70–75 (SQTGNA), 117–120 (STQG), and 153–162 (LGDSSYEFFC). The FAD-binding FR-type domain occupies 234–448 (DAPLVASLSV…IEHNDNFRLP (215 aa)). FAD is bound by residues threonine 322, alanine 356, 386 to 389 (RLYS), 404 to 406 (TVG), tyrosine 410, and 419 to 422 (GGAS). NADP(+) is bound by residues 519-520 (SR), 525-529 (KVYVQ), and aspartate 561. Tyrosine 599 contributes to the FAD binding site.

Belongs to the NADPH-dependent sulphite reductase flavoprotein subunit CysJ family. The protein in the N-terminal section; belongs to the flavodoxin family. It in the C-terminal section; belongs to the flavoprotein pyridine nucleotide cytochrome reductase family. In terms of assembly, alpha(8)-beta(8). The alpha component is a flavoprotein, the beta component is a hemoprotein. Requires FAD as cofactor. FMN serves as cofactor.

It carries out the reaction hydrogen sulfide + 3 NADP(+) + 3 H2O = sulfite + 3 NADPH + 4 H(+). Its pathway is sulfur metabolism; hydrogen sulfide biosynthesis; hydrogen sulfide from sulfite (NADPH route): step 1/1. In terms of biological role, component of the sulfite reductase complex that catalyzes the 6-electron reduction of sulfite to sulfide. This is one of several activities required for the biosynthesis of L-cysteine from sulfate. The flavoprotein component catalyzes the electron flow from NADPH -&gt; FAD -&gt; FMN to the hemoprotein component. This Escherichia coli (strain K12) protein is Sulfite reductase [NADPH] flavoprotein alpha-component.